An 80-amino-acid polypeptide reads, in one-letter code: Iota-conotoxin-like r11c (80 aa).

Positions 1–19 (MKLCLTFLLVLMILASVTG) are cleaved as a signal peptide. Positions 20–35 (EKSSKHTLSRAARVKN) are excised as a propeptide. 4-hydroxyproline; partial occurs at positions 38 and 47. 4 disulfide bridges follow: Cys41–Cys55, Cys48–Cys58, Cys54–Cys63, and Cys57–Cys72. Pro65 is subject to 4-hydroxyproline. Position 78 is a D-leucine (Leu78). Arg80 is a propeptide (removed by a carboxypeptidase).

Post-translationally, the natural D-Leu form of the peptide is more potent than the synthetic L-Leu form. In terms of tissue distribution, expressed by the venom duct.

Its subcellular location is the secreted. Its function is as follows. Iota-conotoxins bind to voltage-gated sodium channels (Nav) and act as agonists by shifting the voltage-dependence of activation to more hyperpolarized levels. Causes circular motion, convulsions, copious urination, rigid paralysis and death upon intracranial injection into mice. Causes unbalanced swimming, swimming in diagonal and vertical motion and death, when injected intraperitoneally into goldfish. L-Leu and D-Leu forms are active on both nerve and muscle. This is Iota-conotoxin-like r11c from Conus radiatus (Rayed cone).